We begin with the raw amino-acid sequence, 449 residues long: Cysteine--tRNA ligase (449 aa).

Cysteine 29 is a binding site for Zn(2+). The short motif at 31 to 41 (PTVYDHLHIGN) is the 'HIGH' region element. The Zn(2+) site is built by cysteine 211, histidine 236, and glutamate 240. A 'KMSKS' region motif is present at residues 269–273 (KMSKS). Lysine 272 provides a ligand contact to ATP.

It belongs to the class-I aminoacyl-tRNA synthetase family. In terms of assembly, monomer. It depends on Zn(2+) as a cofactor.

The protein localises to the cytoplasm. It carries out the reaction tRNA(Cys) + L-cysteine + ATP = L-cysteinyl-tRNA(Cys) + AMP + diphosphate. The chain is Cysteine--tRNA ligase from Methylocella silvestris (strain DSM 15510 / CIP 108128 / LMG 27833 / NCIMB 13906 / BL2).